The primary structure comprises 295 residues: 3-hydroxy-5-phosphonooxypentane-2,4-dione thiolase (295 aa).

Residue lysine 203 is the Schiff-base intermediate with substrate of the active site.

This sequence belongs to the DeoC/FbaB aldolase family. As to quaternary structure, homodecamer.

It localises to the cytoplasm. The enzyme catalyses dihydroxyacetone phosphate + acetyl-CoA = 3-hydroxy-2,4-dioxopentyl phosphate + CoA. Involved in the degradation of phospho-AI-2, thereby terminating induction of the lsr operon and closing the AI-2 signaling cycle. Catalyzes the transfer of an acetyl moiety from 3-hydroxy-5-phosphonooxypentane-2,4-dione to CoA to form glycerone phosphate and acetyl-CoA. The sequence is that of 3-hydroxy-5-phosphonooxypentane-2,4-dione thiolase from Enterobacter sp. (strain 638).